A 165-amino-acid chain; its full sequence is ATP synthase subunit delta, mitochondrial (165 aa).

A mitochondrion-targeting transit peptide spans 1–27 (MNSLRIARAALRVRPTAVRAPLQRRGY).

This sequence belongs to the ATPase epsilon chain family. In terms of assembly, F-type ATPases have 2 components, CF(1) - the catalytic core - and CF(0) - the membrane proton channel. CF(1) has five subunits: alpha(3), beta(3), gamma(1), delta(1), epsilon(1). CF(0) has three main subunits: a, b and c.

It is found in the mitochondrion. The protein localises to the mitochondrion inner membrane. Its function is as follows. Mitochondrial membrane ATP synthase (F(1)F(0) ATP synthase or Complex V) produces ATP from ADP in the presence of a proton gradient across the membrane which is generated by electron transport complexes of the respiratory chain. F-type ATPases consist of two structural domains, F(1) - containing the extramembraneous catalytic core, and F(0) - containing the membrane proton channel, linked together by a central stalk and a peripheral stalk. During catalysis, ATP turnover in the catalytic domain of F(1) is coupled via a rotary mechanism of the central stalk subunits to proton translocation. Part of the complex F(1) domain and of the central stalk which is part of the complex rotary element. Rotation of the central stalk against the surrounding alpha(3)beta(3) subunits leads to hydrolysis of ATP in three separate catalytic sites on the beta subunits. This is ATP synthase subunit delta, mitochondrial (des) from Neurospora crassa (strain ATCC 24698 / 74-OR23-1A / CBS 708.71 / DSM 1257 / FGSC 987).